A 1394-amino-acid polypeptide reads, in one-letter code: DNA-directed RNA polymerase subunit beta' (1394 aa).

Residues C71, C73, C86, and C89 each coordinate Zn(2+). Residues D462, D464, and D466 each coordinate Mg(2+). Zn(2+)-binding residues include C810, C883, C890, and C893.

It belongs to the RNA polymerase beta' chain family. As to quaternary structure, the RNAP catalytic core consists of 2 alpha, 1 beta, 1 beta' and 1 omega subunit. When a sigma factor is associated with the core the holoenzyme is formed, which can initiate transcription. The cofactor is Mg(2+). It depends on Zn(2+) as a cofactor.

It catalyses the reaction RNA(n) + a ribonucleoside 5'-triphosphate = RNA(n+1) + diphosphate. DNA-dependent RNA polymerase catalyzes the transcription of DNA into RNA using the four ribonucleoside triphosphates as substrates. This Beijerinckia indica subsp. indica (strain ATCC 9039 / DSM 1715 / NCIMB 8712) protein is DNA-directed RNA polymerase subunit beta'.